A 351-amino-acid polypeptide reads, in one-letter code: Protein IBD2 (351 aa).

The segment covering 1-14 has biased composition (polar residues); sequence MTPTNQSSGTTNAS. The disordered stretch occupies residues 1–20; sequence MTPTNQSSGTTNASVEVLSE. 2 positions are modified to phosphoserine: Ser100 and Ser106. Thr211 is subject to Phosphothreonine. Positions 223-249 are disordered; the sequence is LHGDGQHSISSRKHSRSKNSKKNGHVR. The span at 232 to 249 shows a compositional bias: basic residues; it reads SSRKHSRSKNSKKNGHVR.

Belongs to the IBD2 family. As to quaternary structure, interacts with BFA1.

Its subcellular location is the cytoplasm. It is found in the cytoskeleton. The protein localises to the spindle pole. Part of a checkpoint which monitors spindle integrity and prevents premature exit from mitosis. This cell-cycle arrest depends upon inhibition of the G-protein TEM1 by the BFA1/BUB2 complex. The polypeptide is Protein IBD2 (IBD2) (Saccharomyces cerevisiae (strain ATCC 204508 / S288c) (Baker's yeast)).